Here is a 298-residue protein sequence, read N- to C-terminus: Plasmodesmata-located protein 7 (298 aa).

An N-terminal signal peptide occupies residues 1 to 30 (MPMAKLRNIIKTLSIFFFLIAATAPSLSSA). At 31–258 (TSATDTFVFG…YKTNYGGEKT (228 aa)) the chain is on the extracellular side. Gnk2-homologous domains follow at residues 35–139 (DTFV…NISF) and 140–240 (LGQE…TDGA). Disulfide bonds link Cys42-Cys117, Cys93-Cys102, Cys105-Cys130, Cys152-Cys218, Cys194-Cys203, and Cys206-Cys231. Residues 259–279 (FAIIIGLLAAVVLLIIFLLFL) traverse the membrane as a helical segment. The tract at residues 259–279 (FAIIIGLLAAVVLLIIFLLFL) is necessary and sufficient for plasmodesmal targeting. Over 280–298 (RGVCSRGGDFSILHSFTLI) the chain is Cytoplasmic.

The protein belongs to the cysteine-rich repeat secretory protein family. Plasmodesmata-located proteins (PDLD) subfamily. (Microbial infection) Interacts with Grapevine fanleaf virus (GFLV) 2B-MP. As to expression, highly expressed in lateral root and elongation zone.

The protein resides in the cell membrane. The protein localises to the cell junction. It localises to the plasmodesma. In terms of biological role, modulates cell-to-cell trafficking. This Arabidopsis thaliana (Mouse-ear cress) protein is Plasmodesmata-located protein 7.